Here is a 189-residue protein sequence, read N- to C-terminus: RxLR effector protein CRE18 (189 aa).

Positions 1–23 (MSKLFYAFAVLAVHVLTSSPTTA) are cleaved as a signal peptide. A RxLR-dEER motif is present at residues 47–68 (RFLRSIHEGEDSLKPSAFSEER).

The protein belongs to the RxLR effector family.

The protein resides in the secreted. The protein localises to the host cytoplasm. It is found in the host nucleus. Effector that is involved in host plant infection. Contributes to virulence during the early infection stage, by inhibiting plant defense responses induced by both PAMP-triggered immunity (PTI) and effector-triggered immunity (ETI). In Phytophthora infestans (strain T30-4) (Potato late blight agent), this protein is RxLR effector protein CRE18.